The sequence spans 77 residues: Spermatid-specific protein T2 (77 aa).

The tract at residues 1–21 is hydrophobic; that stretch reads MKVAANTSKMLVEKLDLLKGG. The segment at 1–77 is disordered; it reads MKVAANTSKM…YSRRRYRRRR (77 aa). Residues 20–77 show a composition bias toward basic residues; the sequence is GGRRRRRRSRRRRRSRRRRSRSPYRRRYRRRRRRRRSRRRRRYRRRRSYSRRRYRRRR.

In terms of processing, phosphorylation occurs at different degrees. The triphosphorylated form may be predominant in T2. SP2 appears to be phosphorylated in elongated spermatids, but dephosphorylated in mature sperm cells. As to expression, testis.

It is found in the nucleus. The protein localises to the chromosome. In terms of biological role, cuttlefish spermiogenesis is characterized by a double nuclear protein transition: histones -&gt; spermatid-specific proteins (T1/T2) -&gt; protamines (SP1/SP2). The protamines compact sperm DNA into a highly condensed, stable and inactive complex. This chain is Spermatid-specific protein T2, found in Sepia officinalis (Common cuttlefish).